Reading from the N-terminus, the 299-residue chain is MGHTLRPGTPLPRCLHLKLCLLLALAGLHFSSGISQVTKSVKEMAALSCDYNISIDELARMRIYWQKDQQMVLSIISGQVEVWPEYKNRTFPDIINNLSLMILALRLSDKGTYTCVVQKNENGSFRREHLTSVTLSIRADFPVPSITDIGHPDPNVKRIRCSASGGFPEPRLAWMEDGEELNAVNTTVDQDLDTELYSVSSELDFNVTNNHSIVCLIKYGELSVSQIFPWSKPKQEPPIDQLPFWVIIPVSGALVLTAVVLYCLACRHVARWKRTRRNEETVGTERLSPIYLGSAQSSG.

Residues 1–32 (MGHTLRPGTPLPRCLHLKLCLLLALAGLHFSS) form the signal peptide. The Ig-like V-type domain occupies 33–131 (GISQVTKSVK…NGSFRREHLT (99 aa)). The Extracellular segment spans residues 33-243 (GISQVTKSVK…KQEPPIDQLP (211 aa)). Cysteines 49 and 115 form a disulfide. 7 N-linked (GlcNAc...) asparagine glycosylation sites follow: Asn-52, Asn-88, Asn-97, Asn-122, Asn-185, Asn-206, and Asn-210. Residues 144-225 (PSITDIGHPD…LIKYGELSVS (82 aa)) form the Ig-like C2-type domain. An intrachain disulfide couples Cys-161 to Cys-215. The chain crosses the membrane as a helical span at residues 244-264 (FWVIIPVSGALVLTAVVLYCL). Over 265 to 299 (ACRHVARWKRTRRNEETVGTERLSPIYLGSAQSSG) the chain is Cytoplasmic.

As to quaternary structure, homodimer. Interacts with CTLA4; this interaction inhibits T-cell activation. Interacts with PDL1/CD274; this interaction blocks PDL1/PDCD1 binding and thus PDL1/CD274 inhibitory function. Interacts with CD28.

The protein resides in the cell membrane. In terms of biological role, costimulatory molecule that belongs to the immunoglobulin superfamily that plays an important role in T-lymphocyte activation. Acts as the primary auxiliary signal augmenting the MHC/TCR signal in naive T-cells together with the CD28 receptor which is constitutively expressed on the cell surface of T-cells. In turn, activates different signaling pathways such as NF-kappa-B or MAPK leading to the production of different cytokines. In addition, CD28/CD80 costimulatory signal stimulates glucose metabolism and ATP synthesis of T-cells by activating the PI3K/Akt signaling pathway. Also acts as a regulator of PDL1/PDCD1 interactions to limit excess engagement of PDL1 and its inhibitory role in immune responses. Expressed on B-cells, plays a critical role in regulating interactions between B-cells and T-cells in both early and late germinal center responses, which are crucial for the generation of effective humoral immune responses. The protein is T-lymphocyte activation antigen CD80 (CD80) of Oryctolagus cuniculus (Rabbit).